Consider the following 206-residue polypeptide: Protein FAM228A (206 aa).

It belongs to the FAM228 family.

The sequence is that of Protein FAM228A (FAM228A) from Homo sapiens (Human).